The chain runs to 272 residues: Small ribosomal subunit protein mS23 (272 aa).

The segment at Lys-233–Phe-272 is disordered. The segment covering Val-252 to Phe-272 has biased composition (acidic residues).

It belongs to the mitochondrion-specific ribosomal protein mS23 family. In terms of assembly, component of the mitochondrial small ribosomal subunit.

The protein localises to the mitochondrion. The polypeptide is Small ribosomal subunit protein mS23 (RSM25) (Candida glabrata (strain ATCC 2001 / BCRC 20586 / JCM 3761 / NBRC 0622 / NRRL Y-65 / CBS 138) (Yeast)).